A 1024-amino-acid polypeptide reads, in one-letter code: Beta-galactosidase (1024 aa).

2 residues coordinate substrate: N103 and D202. D202 is a binding site for Na(+). Positions 417, 419, and 462 each coordinate Mg(2+). Substrate is bound by residues E462 and 538–541; that span reads EYAH. E462 functions as the Proton donor in the catalytic mechanism. E538 functions as the Nucleophile in the catalytic mechanism. N598 is a binding site for Mg(2+). Positions 602 and 605 each coordinate Na(+). Positions 605 and 1000 each coordinate substrate.

Belongs to the glycosyl hydrolase 2 family. In terms of assembly, homotetramer. The cofactor is Mg(2+). Requires Mn(2+) as cofactor. It depends on Na(+) as a cofactor.

It carries out the reaction Hydrolysis of terminal non-reducing beta-D-galactose residues in beta-D-galactosides.. Inhibited by phenylethyl thio-beta-D-galactoside (PETG), isopropyl thio-beta-D-galactoside (IPTG), L-ribose, D-galactonolactone, lactose and 2-amino-D-galactose. In Escherichia coli (strain K12), this protein is Beta-galactosidase (lacZ).